The primary structure comprises 223 residues: ATP-dependent dethiobiotin synthetase BioD (223 aa).

T16 contacts Mg(2+). K37 is a catalytic residue. Residue S41 coordinates substrate. Mg(2+) is bound by residues D50 and E111. Residues D50, 111-114, and 171-172 each bind ATP; these read EGAG and NR.

It belongs to the dethiobiotin synthetase family. Homodimer. It depends on Mg(2+) as a cofactor.

It is found in the cytoplasm. It catalyses the reaction (7R,8S)-7,8-diammoniononanoate + CO2 + ATP = (4R,5S)-dethiobiotin + ADP + phosphate + 3 H(+). The protein operates within cofactor biosynthesis; biotin biosynthesis; biotin from 7,8-diaminononanoate: step 1/2. Catalyzes a mechanistically unusual reaction, the ATP-dependent insertion of CO2 between the N7 and N8 nitrogen atoms of 7,8-diaminopelargonic acid (DAPA, also called 7,8-diammoniononanoate) to form a ureido ring. The sequence is that of ATP-dependent dethiobiotin synthetase BioD from Anaeromyxobacter sp. (strain K).